Reading from the N-terminus, the 201-residue chain is Cysteine dioxygenase type 1 (201 aa).

The Fe cation site is built by histidine 86, histidine 88, and histidine 141. Residues 93–158 constitute a cross-link (3'-(S-cysteinyl)-tyrosine (Cys-Tyr)); it reads CFLKLLQGQL…TEPAVSLHLY (66 aa).

It belongs to the cysteine dioxygenase family. In terms of assembly, monomer. The cofactor is Fe cation. It depends on Ni(2+) as a cofactor. Zn(2+) is required as a cofactor. Post-translationally, the thioether cross-link between Cys-93 and Tyr-158 plays a structural role through stabilizing the Fe(2+) ion, and prevents the production of highly damaging free hydroxyl radicals by holding the oxygen radical via hydroxyl hydrogen.

The catalysed reaction is L-cysteine + O2 = 3-sulfino-L-alanine + H(+). Its pathway is organosulfur biosynthesis; taurine biosynthesis; hypotaurine from L-cysteine: step 1/2. Its function is as follows. Catalyzes the oxidation of cysteine to cysteine sulfinic acid with addition of molecular dioxygen. This chain is Cysteine dioxygenase type 1 (cdo1), found in Danio rerio (Zebrafish).